The primary structure comprises 469 residues: 3-isopropylmalate dehydratase large subunit (469 aa).

Residues Cys-347, Cys-408, and Cys-411 each contribute to the [4Fe-4S] cluster site.

Belongs to the aconitase/IPM isomerase family. LeuC type 1 subfamily. As to quaternary structure, heterodimer of LeuC and LeuD. It depends on [4Fe-4S] cluster as a cofactor.

The enzyme catalyses (2R,3S)-3-isopropylmalate = (2S)-2-isopropylmalate. The protein operates within amino-acid biosynthesis; L-leucine biosynthesis; L-leucine from 3-methyl-2-oxobutanoate: step 2/4. Catalyzes the isomerization between 2-isopropylmalate and 3-isopropylmalate, via the formation of 2-isopropylmaleate. The chain is 3-isopropylmalate dehydratase large subunit from Histophilus somni (strain 129Pt) (Haemophilus somnus).